The chain runs to 434 residues: Methylenetetrahydrofolate--tRNA-(uracil-5-)-methyltransferase TrmFO (434 aa).

Position 9 to 14 (9 to 14) interacts with FAD; sequence GAGLAG.

This sequence belongs to the MnmG family. TrmFO subfamily. The cofactor is FAD.

It is found in the cytoplasm. It carries out the reaction uridine(54) in tRNA + (6R)-5,10-methylene-5,6,7,8-tetrahydrofolate + NADH + H(+) = 5-methyluridine(54) in tRNA + (6S)-5,6,7,8-tetrahydrofolate + NAD(+). The enzyme catalyses uridine(54) in tRNA + (6R)-5,10-methylene-5,6,7,8-tetrahydrofolate + NADPH + H(+) = 5-methyluridine(54) in tRNA + (6S)-5,6,7,8-tetrahydrofolate + NADP(+). Functionally, catalyzes the folate-dependent formation of 5-methyl-uridine at position 54 (M-5-U54) in all tRNAs. The sequence is that of Methylenetetrahydrofolate--tRNA-(uracil-5-)-methyltransferase TrmFO from Bacillus licheniformis (strain ATCC 14580 / DSM 13 / JCM 2505 / CCUG 7422 / NBRC 12200 / NCIMB 9375 / NCTC 10341 / NRRL NRS-1264 / Gibson 46).